Consider the following 223-residue polypeptide: Sigma non-opioid intracellular receptor 1 (223 aa).

At 1–9 (MPWAAGRRW) the chain is on the lumenal side. The targeting to endoplasmic reticulum-associated lipid droplets stretch occupies residues 2 to 8 (PWAAGRR). A helical membrane pass occupies residues 10–30 (AWITLILTIIAVLIQAAWLWL). Over 31–223 (GTQNFVFSRE…LTTYLFGQDS (193 aa)) the chain is Cytoplasmic. Residues 99 to 106 (SLSEYVLL) are important for ligand-binding. Positions 177 to 223 (VIPSTLFFALADTFFSTQDYLTLFYTLRAYARGLRLELTTYLFGQDS) are C-terminal hydrophobic region.

The protein belongs to the ERG2 family. In terms of assembly, homotrimer. Interacts with KCNA4. Interacts with KCNA2; cocaine consumption leads to increased interaction. Forms a ternary complex with ANK2 and ITPR3. The complex is disrupted by agonists. Interacts with RNF112 in an oxidative stress-regulated manner. As to expression, widely expressed with higher expression in liver, brain, kidney and thymus. Expressed throughout the brain with higher expression within cerebral cortex, hippocampus and cerebellum. Within the hippocampus expressed in cornu ammonis pyramidal neurons, the granular cells of the dentate gyrus as well as interneurons. Within the cerebellum, expressed in Purkinje cell bodies. Highly expressed in the brainstem and motor neurons of the spinal cord. Expressed by neural retina, retinal pigment epithelial cells and lens.

It localises to the nucleus inner membrane. Its subcellular location is the nucleus outer membrane. The protein localises to the nucleus envelope. The protein resides in the cytoplasmic vesicle. It is found in the endoplasmic reticulum membrane. It localises to the membrane. Its subcellular location is the lipid droplet. The protein localises to the cell junction. The protein resides in the cell membrane. It is found in the cell projection. It localises to the growth cone. Its subcellular location is the postsynaptic density membrane. Functions in lipid transport from the endoplasmic reticulum and is involved in a wide array of cellular functions probably through regulation of the biogenesis of lipid microdomains at the plasma membrane. Involved in the regulation of different receptors it plays a role in BDNF signaling and EGF signaling. Also regulates ion channels like the potassium channel and could modulate neurotransmitter release. Plays a role in calcium signaling through modulation together with ANK2 of the ITP3R-dependent calcium efflux at the endoplasmic reticulum. Plays a role in several other cell functions including proliferation, survival and death. Originally identified for its ability to bind various psychoactive drugs it is involved in learning processes, memory and mood alteration. Necessary for proper mitochondrial axonal transport in motor neurons, in particular the retrograde movement of mitochondria. Plays a role in protecting cells against oxidative stress-induced cell death via its interaction with RNF112. This is Sigma non-opioid intracellular receptor 1 (Sigmar1) from Mus musculus (Mouse).